Reading from the N-terminus, the 500-residue chain is MEPSQRSGSFSSISRRRSRVDSRPTYFKVTSKDLGFVDQVSEEYEFYTYPKKASEVESVTETFQSNRSSLVPTYPVDENANKLPPKVSIAFILINSLMSDMSLAVALPTSASYTQSLGGTNAFSGLVIGIPTLISLIFLYPMLCFANPKSANGYTLYFRPMVVSSFAHIFGHLLYCMAYRANWIYLILIGRMLNGIGFTTFLYHKKYTTDKLLVGQNRRTFLATMNILAQTLGFMAGPFLGGILAKATIHSKNAVWNQYTVASWVMLFMWFFYMLTIIFFFKEVTADKSEKVSQQKENDDEDRPKLSWKHKFLLFFLAEVAFIAYFTVNGYQASISIYTGKLYNYDAFQSGNFIALSALIVAPFILASSFLSRWLEDRHIMLGGLFLGILAVAIHLVLDAVHKLPMQVYFFLYSLMIYGYSIGSAPLISLSSKQLHPRHHNTASIVVQVGVSLSNTFGSICGGAIYNITTVGFISLCLGLAAVVYMQLIFMWGSLKCKTH.

Over residues 1 to 13 (MEPSQRSGSFSSI) the composition is skewed to low complexity. A disordered region spans residues 1-23 (MEPSQRSGSFSSISRRRSRVDSR). A Phosphoserine modification is found at serine 9. Transmembrane regions (helical) follow at residues 87–107 (VSIA…AVAL), 126–146 (LVIG…LCFA), 156–176 (LYFR…LLYC), 183–203 (WIYL…TFLY), 225–245 (MNIL…GILA), 261–281 (VASW…IFFF), 312–332 (FLLF…NGYQ), 351–371 (GNFI…SSFL), 380–400 (IMLG…VLDA), 408–428 (VYFF…APLI), 445–465 (IVVQ…GGAI), and 471–491 (VGFI…LIFM).

It belongs to the major facilitator superfamily.

It is found in the golgi apparatus. It localises to the membrane. This is an uncharacterized protein from Schizosaccharomyces pombe (strain 972 / ATCC 24843) (Fission yeast).